A 200-amino-acid chain; its full sequence is Small ribosomal subunit protein uS4 (200 aa).

The segment at 20–41 (TGTGKELDKRPYAPGQHGPNQR) is disordered. Residues 92 to 152 (SRLDNLVYRL…EKSKNLDVVK (61 aa)) form the S4 RNA-binding domain.

This sequence belongs to the universal ribosomal protein uS4 family. As to quaternary structure, part of the 30S ribosomal subunit. Contacts protein S5. The interaction surface between S4 and S5 is involved in control of translational fidelity.

Its function is as follows. One of the primary rRNA binding proteins, it binds directly to 16S rRNA where it nucleates assembly of the body of the 30S subunit. With S5 and S12 plays an important role in translational accuracy. In Oceanobacillus iheyensis (strain DSM 14371 / CIP 107618 / JCM 11309 / KCTC 3954 / HTE831), this protein is Small ribosomal subunit protein uS4.